Consider the following 329-residue polypeptide: Diaminopimelate epimerase (329 aa).

Asparagine 14 and asparagine 73 together coordinate substrate. Cysteine 82 (proton donor) is an active-site residue. Residues 83–84 (GN), asparagine 170, asparagine 206, and 224–225 (ER) each bind substrate. Residue cysteine 233 is the Proton acceptor of the active site. 234–235 (GT) contacts substrate.

This sequence belongs to the diaminopimelate epimerase family. Homodimer.

The protein resides in the cytoplasm. The enzyme catalyses (2S,6S)-2,6-diaminopimelate = meso-2,6-diaminopimelate. It participates in amino-acid biosynthesis; L-lysine biosynthesis via DAP pathway; DL-2,6-diaminopimelate from LL-2,6-diaminopimelate: step 1/1. Catalyzes the stereoinversion of LL-2,6-diaminopimelate (L,L-DAP) to meso-diaminopimelate (meso-DAP), a precursor of L-lysine and an essential component of the bacterial peptidoglycan. The chain is Diaminopimelate epimerase from Listeria innocua serovar 6a (strain ATCC BAA-680 / CLIP 11262).